The chain runs to 186 residues: MAKNEIIQKAEEKMQKAQNVLERDLGSIRAGRANASLLDKVSVDYYGAPTPLNQMASITIPEPRVLLVTPYDKSVLNDIEQAILMSDLGINPANDGSAIRLVVPQLTEETRKDLAKNVKAEGEKAKVAVRNIRRDAMDTLKKANKNGDYNDDEFHDLEKQTQDSTDKAIKVVDEIVANKEKEVLEG.

This sequence belongs to the RRF family.

The protein localises to the cytoplasm. Functionally, responsible for the release of ribosomes from messenger RNA at the termination of protein biosynthesis. May increase the efficiency of translation by recycling ribosomes from one round of translation to another. The protein is Ribosome-recycling factor of Pediococcus pentosaceus (strain ATCC 25745 / CCUG 21536 / LMG 10740 / 183-1w).